The following is a 191-amino-acid chain: Small ribosomal subunit protein eS7z (191 aa).

N-acetylmethionine is present on Met1. A coiled-coil region spans residues 15 to 50 (ELSELDEQVAQAFFDLENTNQELKSELKDLYVNSAV).

It belongs to the eukaryotic ribosomal protein eS7 family.

In Arabidopsis thaliana (Mouse-ear cress), this protein is Small ribosomal subunit protein eS7z (RPS7A).